The chain runs to 728 residues: Protein Hook homolog 1 (728 aa).

Residue Met-1 is modified to N-acetylmethionine. Residues 1–555 are sufficient for interaction with microtubules; sequence MEDPQPLPQS…LKQKLEAHME (555 aa). In terms of domain architecture, Calponin-homology (CH) spans 12 to 128; it reads LPLCDSLIIW…RLLQLILGCA (117 aa). Coiled coils occupy residues 168-443 and 477-658; these read PASD…LNQA and LRLQ…AKLR. The residue at position 235 (Ser-235) is a Phosphoserine. A disordered region spans residues 481 to 510; the sequence is QEGTENERIEQLQEQLEQKHRKMNELETEQ. Residues 657–728 form a sufficient for interaction with AKTIP and VPS18 region; the sequence is LRDYEEKLIV…SVKVPAAASD (72 aa). A phosphoserine mark is found at Ser-719 and Ser-727.

The protein belongs to the hook family. In terms of assembly, self-associates. Component of the FTS/Hook/FHIP complex (FHF complex), composed of AKTIP/FTS, FHIP1B, and one or more members of the Hook family of proteins HOOK1, HOOK2, and HOOK3. Interacts directly with AKTIP/FTS, HOOK2 and HOOK3. Associates with several subunits of the homotypic vesicular sorting complex (the HOPS complex) including VPS16, VPS18, VPS39 and VPS41; these interactions may be indirect. Interacts with CCDC181. Interacts (via coiled-coil region) with RIMBP3 (via C-terminus). Interacts with LRGUK (via guanylate kinase-like domain). Interacts with microtubules. May interacts with CLN3. Interacts with AP4M1; the interaction is direct, mediates the interaction between FTS-Hook-FHIP (FHF) complex and AP-4 and the perinuclear distribution of AP-4. In terms of tissue distribution, mainly expressed in testis.

The protein localises to the cytoplasm. It localises to the cytoskeleton. Its function is as follows. Component of the FTS/Hook/FHIP complex (FHF complex). The FHF complex may function to promote vesicle trafficking and/or fusion via the homotypic vesicular protein sorting complex (the HOPS complex). FHF complex promotes the distribution of AP-4 complex to the perinuclear area of the cell. Required for spermatid differentiation. Probably involved in the positioning of the microtubules of the manchette and the flagellum in relation to the membrane skeleton. The chain is Protein Hook homolog 1 (Hook1) from Mus musculus (Mouse).